A 132-amino-acid chain; its full sequence is Small ribosomal subunit protein uS8 (132 aa).

The protein belongs to the universal ribosomal protein uS8 family. As to quaternary structure, part of the 30S ribosomal subunit. Contacts proteins S5 and S12.

In terms of biological role, one of the primary rRNA binding proteins, it binds directly to 16S rRNA central domain where it helps coordinate assembly of the platform of the 30S subunit. In Nitrobacter hamburgensis (strain DSM 10229 / NCIMB 13809 / X14), this protein is Small ribosomal subunit protein uS8.